The primary structure comprises 422 residues: UDP-N-acetylglucosamine 1-carboxyvinyltransferase (422 aa).

22 to 23 contributes to the phosphoenolpyruvate binding site; the sequence is KN. Residue Arg92 participates in UDP-N-acetyl-alpha-D-glucosamine binding. Residue Cys116 is the Proton donor of the active site. A 2-(S-cysteinyl)pyruvic acid O-phosphothioketal modification is found at Cys116. Residues Asp306 and Ile328 each coordinate UDP-N-acetyl-alpha-D-glucosamine.

The protein belongs to the EPSP synthase family. MurA subfamily.

The protein localises to the cytoplasm. It catalyses the reaction phosphoenolpyruvate + UDP-N-acetyl-alpha-D-glucosamine = UDP-N-acetyl-3-O-(1-carboxyvinyl)-alpha-D-glucosamine + phosphate. Its pathway is cell wall biogenesis; peptidoglycan biosynthesis. Cell wall formation. Adds enolpyruvyl to UDP-N-acetylglucosamine. This is UDP-N-acetylglucosamine 1-carboxyvinyltransferase from Elusimicrobium minutum (strain Pei191).